A 127-amino-acid polypeptide reads, in one-letter code: Small ribosomal subunit protein bS6 (127 aa).

The tract at residues 101–127 is disordered; the sequence is PMMKEEKARDLLQGAKADAPAEQPAAA. Residues 115 to 127 are compositionally biased toward low complexity; that stretch reads AKADAPAEQPAAA.

Belongs to the bacterial ribosomal protein bS6 family.

In terms of biological role, binds together with bS18 to 16S ribosomal RNA. The sequence is that of Small ribosomal subunit protein bS6 from Thiobacillus denitrificans (strain ATCC 25259 / T1).